The sequence spans 429 residues: C4-dicarboxylate transport protein (429 aa).

The next 8 membrane-spanning stretches (helical) occupy residues 9-29, 45-65, 79-99, 149-169, 185-205, 223-243, 308-328, and 356-376; these read VLYV…HYYP, LIKM…IAGM, LLYF…ATHI, GEIL…AHLG, VLFG…FGAM, LIGT…GTIA, IYMT…LTWM, and AATL…ILGI.

The protein belongs to the dicarboxylate/amino acid:cation symporter (DAACS) (TC 2.A.23) family.

It is found in the cell inner membrane. Functionally, responsible for the transport of dicarboxylates such as succinate, fumarate, and malate from the periplasm across the membrane. The polypeptide is C4-dicarboxylate transport protein (Burkholderia lata (strain ATCC 17760 / DSM 23089 / LMG 22485 / NCIMB 9086 / R18194 / 383)).